The following is a 164-amino-acid chain: Zinc finger protein ZAT8 (164 aa).

C2H2-type zinc fingers lie at residues 37–59 (FRCK…RASH) and 85–107 (HPCP…MRRH).

The protein resides in the nucleus. Functionally, probable transcription factor that may be involved in stress responses. This Arabidopsis thaliana (Mouse-ear cress) protein is Zinc finger protein ZAT8 (ZAT8).